The sequence spans 238 residues: 2-C-methyl-D-erythritol 4-phosphate cytidylyltransferase (238 aa).

The protein belongs to the IspD/TarI cytidylyltransferase family. IspD subfamily.

It catalyses the reaction 2-C-methyl-D-erythritol 4-phosphate + CTP + H(+) = 4-CDP-2-C-methyl-D-erythritol + diphosphate. The protein operates within isoprenoid biosynthesis; isopentenyl diphosphate biosynthesis via DXP pathway; isopentenyl diphosphate from 1-deoxy-D-xylulose 5-phosphate: step 2/6. Catalyzes the formation of 4-diphosphocytidyl-2-C-methyl-D-erythritol from CTP and 2-C-methyl-D-erythritol 4-phosphate (MEP). The protein is 2-C-methyl-D-erythritol 4-phosphate cytidylyltransferase of Paraburkholderia phytofirmans (strain DSM 17436 / LMG 22146 / PsJN) (Burkholderia phytofirmans).